A 468-amino-acid chain; its full sequence is Ribulose bisphosphate carboxylase large chain (468 aa).

Residue K5 is modified to N6,N6,N6-trimethyllysine. Positions 114 and 164 each coordinate substrate. K166 acts as the Proton acceptor in catalysis. Residue K168 participates in substrate binding. K192, D194, and E195 together coordinate Mg(2+). K192 is subject to N6-carboxylysine. Catalysis depends on H285, which acts as the Proton acceptor. Substrate-binding residues include R286, H318, and S370.

This sequence belongs to the RuBisCO large chain family. Type I subfamily. In terms of assembly, heterohexadecamer of 8 large chains and 8 small chains; disulfide-linked. The disulfide link is formed within the large subunit homodimers. Requires Mg(2+) as cofactor. In terms of processing, the disulfide bond which can form in the large chain dimeric partners within the hexadecamer appears to be associated with oxidative stress and protein turnover.

The protein localises to the plastid. Its subcellular location is the chloroplast. The catalysed reaction is 2 (2R)-3-phosphoglycerate + 2 H(+) = D-ribulose 1,5-bisphosphate + CO2 + H2O. It catalyses the reaction D-ribulose 1,5-bisphosphate + O2 = 2-phosphoglycolate + (2R)-3-phosphoglycerate + 2 H(+). In terms of biological role, ruBisCO catalyzes two reactions: the carboxylation of D-ribulose 1,5-bisphosphate, the primary event in carbon dioxide fixation, as well as the oxidative fragmentation of the pentose substrate in the photorespiration process. Both reactions occur simultaneously and in competition at the same active site. This is Ribulose bisphosphate carboxylase large chain from Nolana spathulata (Chilean bell flower).